The following is a 1175-amino-acid chain: Tyrosine-protein phosphatase non-receptor type 21 (1175 aa).

Residues 23–308 (LVARIQLLNN…ARHKFYRLNQ (286 aa)) form the FERM domain. Over residues 395–421 (YSAHSTNSLNTPQPYLQPSPMSSNPSI) the composition is skewed to polar residues. The tract at residues 395-445 (YSAHSTNSLNTPQPYLQPSPMSSNPSIPGSDVMRPDYIPSHRHSALIPPSY) is disordered. Phosphoserine is present on residues Ser577, Ser589, Ser590, Ser637, Ser673, Ser710, Ser711, Ser798, Ser800, and Ser805. Residues 663–702 (DVAPRTFSAGSQSSVFSDKVKQEGTEEQGSGGYSHKKSLS) form a disordered region. The region spanning 897–1168 (VFTEYERILK…TFVYRVLIQF (272 aa)) is the Tyrosine-protein phosphatase domain. Substrate-binding positions include Glu1068, 1109 to 1115 (CSAGVGR), and Gln1153. Cys1109 functions as the Phosphocysteine intermediate in the catalytic mechanism.

Belongs to the protein-tyrosine phosphatase family. Non-receptor class subfamily. Particularly abundantly in adrenal glands.

Its subcellular location is the cytoplasm. The protein localises to the cytoskeleton. The catalysed reaction is O-phospho-L-tyrosyl-[protein] + H2O = L-tyrosyl-[protein] + phosphate. The protein is Tyrosine-protein phosphatase non-receptor type 21 (Ptpn21) of Rattus norvegicus (Rat).